A 343-amino-acid polypeptide reads, in one-letter code: Uroporphyrinogen decarboxylase (343 aa).

Substrate contacts are provided by residues 26 to 30 (RQAGR), aspartate 75, tyrosine 150, serine 205, and histidine 319.

It belongs to the uroporphyrinogen decarboxylase family. Homodimer.

The protein resides in the cytoplasm. It carries out the reaction uroporphyrinogen III + 4 H(+) = coproporphyrinogen III + 4 CO2. Its pathway is porphyrin-containing compound metabolism; protoporphyrin-IX biosynthesis; coproporphyrinogen-III from 5-aminolevulinate: step 4/4. Its function is as follows. Catalyzes the decarboxylation of four acetate groups of uroporphyrinogen-III to yield coproporphyrinogen-III. The protein is Uroporphyrinogen decarboxylase of Syntrophotalea carbinolica (strain DSM 2380 / NBRC 103641 / GraBd1) (Pelobacter carbinolicus).